Consider the following 274-residue polypeptide: Large ribosomal subunit protein uL2 (274 aa).

Residues 195–274 (VGNSDHGLER…SKYIIERRKK (80 aa)) form a disordered region. 2 stretches are compositionally biased toward basic residues: residues 207-220 (KAGRSRWQGRRPRN) and 244-264 (PRSRKGLYAKGLKTRAPKKQS).

Belongs to the universal ribosomal protein uL2 family. Part of the 50S ribosomal subunit. Forms a bridge to the 30S subunit in the 70S ribosome.

One of the primary rRNA binding proteins. Required for association of the 30S and 50S subunits to form the 70S ribosome, for tRNA binding and peptide bond formation. It has been suggested to have peptidyltransferase activity; this is somewhat controversial. Makes several contacts with the 16S rRNA in the 70S ribosome. This chain is Large ribosomal subunit protein uL2, found in Bacteroides thetaiotaomicron (strain ATCC 29148 / DSM 2079 / JCM 5827 / CCUG 10774 / NCTC 10582 / VPI-5482 / E50).